We begin with the raw amino-acid sequence, 357 residues long: MRSNLCHPLKNQLPISFFLSGTIRKPIFSCSRLSISAIITKEQTQEESESKSKKEVAFSSSSSFDFKAYMIGKANSVNKALEDAVLVREPLKIHESMRYSLLAGGKRVRPMLCIAACELFGGTESVAMPSACAVEMIHTMSLMHDDLPCMDNDDLRRGKPTNHKVFGEDVAVLAGDALLAFAFEHIATATKGVSSERIVRVVGELAKCIGSEGLVAGQVVDVCSEGIADVGLEHLEFIHIHKTAALLEGSVVLGAIVGGANDEQISKLRKFARCIGLLFQVVDDILDVTKSSQELGKTAGKDLVADKVTYPKLLGIDKSREFAEKLNREAQEQLAEFDPEKAAPLIALANYIAYRDN.

A chloroplast-targeting transit peptide spans 1–40 (MRSNLCHPLKNQLPISFFLSGTIRKPIFSCSRLSISAIIT). Residues Lys-106, Arg-109, and His-138 each coordinate isopentenyl diphosphate. Mg(2+) is bound by residues Asp-145 and Asp-151. A dimethylallyl diphosphate-binding site is contributed by Arg-156. Residue Arg-157 coordinates isopentenyl diphosphate. Dimethylallyl diphosphate contacts are provided by Lys-242, Thr-243, Gln-280, Lys-297, and Lys-307.

The protein belongs to the FPP/GGPP synthase family. The cofactor is Mg(2+).

It is found in the plastid. It localises to the chloroplast. It carries out the reaction isopentenyl diphosphate + dimethylallyl diphosphate = (2E)-geranyl diphosphate + diphosphate. The enzyme catalyses isopentenyl diphosphate + (2E)-geranyl diphosphate = (2E,6E)-farnesyl diphosphate + diphosphate. The catalysed reaction is isopentenyl diphosphate + (2E,6E)-farnesyl diphosphate = (2E,6E,10E)-geranylgeranyl diphosphate + diphosphate. It functions in the pathway isoprenoid biosynthesis; farnesyl diphosphate biosynthesis; farnesyl diphosphate from geranyl diphosphate and isopentenyl diphosphate: step 1/1. Its pathway is isoprenoid biosynthesis; geranyl diphosphate biosynthesis; geranyl diphosphate from dimethylallyl diphosphate and isopentenyl diphosphate: step 1/1. The protein operates within isoprenoid biosynthesis; geranylgeranyl diphosphate biosynthesis; geranylgeranyl diphosphate from farnesyl diphosphate and isopentenyl diphosphate: step 1/1. Its function is as follows. Catalyzes the trans-addition of the three molecules of IPP onto DMAPP to form geranylgeranyl pyrophosphate. The sequence is that of Geranylgeranyl pyrophosphate synthase, chloroplastic (GGPS1) from Catharanthus roseus (Madagascar periwinkle).